The chain runs to 422 residues: Inhibitor of growth protein 1 (422 aa).

The tract at residues 261–349 (ELGDTAGNSG…EASPADLPID (89 aa)) is disordered. Lys278 is covalently cross-linked (Glycyl lysine isopeptide (Lys-Gly) (interchain with G-Cter in SUMO2)). Over residues 297–314 (RNNENRENASSNHDHDDG) the composition is skewed to basic and acidic residues. Basic residues predominate over residues 322–334 (KKAKTSKKKKRSK). A PHD-type zinc finger spans residues 353–402 (PTYCLCNQVSYGEMIGCDNDECPIEWFHFSCVGLNHKPKGKWYCPKCRGE). Zn(2+) is bound by residues Cys356, Cys358, Cys369, Cys374, His380, Cys383, Cys396, and Cys399. A PBR region spans residues 405-422 (KTMDKALEKSKKERAYNR).

This sequence belongs to the ING family. As to quaternary structure, interacts with H3K4me3 and to a lesser extent with H3K4me2. Interacts with TP53. Isoform 2 interacts with RSL1D1. Isoform 2 was expressed in all normal tissues and cells examined, as well as in all breast cancer and melanoma cell lines examined. Isoform 3 was expressed in testis, liver, and kidney, weakly expressed in colon and brain and not expressed in breast and cultured melanocytes. Isoform 4 was highly expressed in testis and weakly expressed in brain, but not expressed in breast, colon, kidney, melanocytes, breast cancer or melanoma cell lines.

It is found in the nucleus. In terms of biological role, cooperates with p53/TP53 in the negative regulatory pathway of cell growth by modulating p53-dependent transcriptional activation. Implicated as a tumor suppressor gene. This is Inhibitor of growth protein 1 (ING1) from Homo sapiens (Human).